The chain runs to 125 residues: uncharacterized protein (125 aa).

Residues 14–112 (CPVEFTLDVI…WGESNRDVLE (99 aa)) enclose the HTH hxlR-type domain.

This is an uncharacterized protein from Bacillus subtilis (strain 168).